Reading from the N-terminus, the 134-residue chain is Small ribosomal subunit protein uS11 (134 aa).

Disordered stretches follow at residues Met1–Gly24 and Ile115–Val134. Over residues Ala9–Lys18 the composition is skewed to basic residues.

This sequence belongs to the universal ribosomal protein uS11 family. As to quaternary structure, part of the 30S ribosomal subunit. Interacts with proteins S7 and S18. Binds to IF-3.

Located on the platform of the 30S subunit, it bridges several disparate RNA helices of the 16S rRNA. Forms part of the Shine-Dalgarno cleft in the 70S ribosome. The chain is Small ribosomal subunit protein uS11 from Saccharopolyspora erythraea (strain ATCC 11635 / DSM 40517 / JCM 4748 / NBRC 13426 / NCIMB 8594 / NRRL 2338).